The following is a 386-amino-acid chain: MNIHEYQAKQILKRFGISVPEGVIVHSLNEVNDAINKINSKVIVVKAQIHAGGRGKAGGVIVSRTLDEAKTAIKNMLGSTLVTHQTSKDGQKVRKVYLEEGCDIKKEYYISAIVNRKHGQISIIFSTEGGVDIEEVAANSPEKVVTCNIDPIFGFQGFHGRNLCFDSNLSVDQTRKITSIAEKIYKTMLETDASQIEINPLIETSSGDFIALDAKMNFDDNAIYRHPEILELRDYDEEIPEEIEASKHGLSYIKMDGNIGCMVNGAGLAMATMDIIKYYGAEPANFLDVGGGASQQTVTEAFKIILSDNVDGILVNIFGGIMRCDIIANGIIAAIQEIGINVPLVVRLSGTNFELGKKLLDNSKLNIITAHDLSEAAYNIVNIVKK.

The ATP-grasp domain occupies 9-244 (KQILKRFGIS…YDEEIPEEIE (236 aa)). ATP-binding positions include Lys-46, 53–55 (GRG), Glu-99, Cys-102, and Glu-107. Residues Asn-199 and Asp-213 each coordinate Mg(2+). Residues Asn-264 and 320–322 (GIM) each bind substrate.

The protein belongs to the succinate/malate CoA ligase beta subunit family. As to quaternary structure, heterotetramer of two alpha and two beta subunits. The cofactor is Mg(2+).

The enzyme catalyses succinate + ATP + CoA = succinyl-CoA + ADP + phosphate. It catalyses the reaction GTP + succinate + CoA = succinyl-CoA + GDP + phosphate. Its pathway is carbohydrate metabolism; tricarboxylic acid cycle; succinate from succinyl-CoA (ligase route): step 1/1. In terms of biological role, succinyl-CoA synthetase functions in the citric acid cycle (TCA), coupling the hydrolysis of succinyl-CoA to the synthesis of either ATP or GTP and thus represents the only step of substrate-level phosphorylation in the TCA. The beta subunit provides nucleotide specificity of the enzyme and binds the substrate succinate, while the binding sites for coenzyme A and phosphate are found in the alpha subunit. This Ehrlichia ruminantium (strain Welgevonden) protein is Succinate--CoA ligase [ADP-forming] subunit beta.